Reading from the N-terminus, the 471-residue chain is UDP-N-acetylmuramate--L-alanine ligase (471 aa).

114–120 lines the ATP pocket; that stretch reads GTHGKTT.

The protein belongs to the MurCDEF family.

The protein resides in the cytoplasm. The catalysed reaction is UDP-N-acetyl-alpha-D-muramate + L-alanine + ATP = UDP-N-acetyl-alpha-D-muramoyl-L-alanine + ADP + phosphate + H(+). The protein operates within cell wall biogenesis; peptidoglycan biosynthesis. In terms of biological role, cell wall formation. This chain is UDP-N-acetylmuramate--L-alanine ligase, found in Allorhizobium ampelinum (strain ATCC BAA-846 / DSM 112012 / S4) (Agrobacterium vitis (strain S4)).